A 429-amino-acid chain; its full sequence is Integral membrane protein GPR137C (429 aa).

Over residues 1 to 17 (MRVSVPGPAAAAAPAAG) the composition is skewed to low complexity. Residues 1-29 (MRVSVPGPAAAAAPAAGREPSTPGGGSGG) are disordered. Over 1–48 (MRVSVPGPAAAAAPAAGREPSTPGGGSGGGGAVAAASGAAVPGSVQLA) the chain is Lumenal. A helical transmembrane segment spans residues 49–69 (LSVLHALLYAALFAFAYLQLW). The Cytoplasmic segment spans residues 70 to 83 (RLLLYRERRLSYQS). A helical transmembrane segment spans residues 84–104 (LCLFLCLLWAALRTTLFSAAF). Residues 105–120 (SLSGSLPLLRPPAHLH) are Lumenal-facing. A helical transmembrane segment spans residues 121-141 (FFPHWLLYCFPSCLQFSTLCL). At 142–167 (LNLYLAEVICKVRCATELDRHKILLH) the chain is on the cytoplasmic side. A helical transmembrane segment spans residues 168-188 (LGFIMASLLFLVVNLTCAMLV). The Lumenal portion of the chain corresponds to 189-205 (HGDVPENQLKWTVFVRA). A helical transmembrane segment spans residues 206 to 226 (LINDSLFILCAISLVCYICKI). The Cytoplasmic portion of the chain corresponds to 227–246 (TKMSSANVYLESKGMSLCQT). A helical membrane pass occupies residues 247-267 (VVVGSVVILLYSSRACYNLVV). Over 268–300 (VTISQDTLESPFNYGWDNLSDKAHVEDISGEEY) the chain is Lumenal. The N-linked (GlcNAc...) asparagine glycan is linked to Asn-285. A helical transmembrane segment spans residues 301–321 (IVFGMVLFLWEHVPAWSVVLF). The Cytoplasmic segment spans residues 322 to 429 (FRAQRLNQNL…HHSLYVTPQN (108 aa)).

The protein belongs to the GPR137 family.

It localises to the lysosome membrane. Lysosomal integral membrane protein that may regulate MTORC1 complex translocation to lysosomes. This chain is Integral membrane protein GPR137C (GPR137C), found in Homo sapiens (Human).